The chain runs to 352 residues: Maleylacetate reductase (352 aa).

Belongs to the iron-containing alcohol dehydrogenase family.

The catalysed reaction is 3-oxoadipate + NAD(+) = maleylacetate + NADH + H(+). The enzyme catalyses 3-oxoadipate + NADP(+) = maleylacetate + NADPH + H(+). It functions in the pathway aromatic compound metabolism; 3-chlorocatechol degradation. This Pseudomonas aeruginosa protein is Maleylacetate reductase (clcE).